The primary structure comprises 258 residues: Small ribosomal subunit protein uS2 (258 aa).

The tract at residues 226-258 (AQNKDVEPVADKDEKPEAAPVDEAETATETTGE) is disordered. Over residues 229–242 (KDVEPVADKDEKPE) the composition is skewed to basic and acidic residues. The segment covering 245 to 258 (PVDEAETATETTGE) has biased composition (acidic residues).

It belongs to the universal ribosomal protein uS2 family.

In Solidesulfovibrio magneticus (strain ATCC 700980 / DSM 13731 / RS-1) (Desulfovibrio magneticus), this protein is Small ribosomal subunit protein uS2.